An 88-amino-acid chain; its full sequence is Prolevitide (88 aa).

A signal peptide spans 1–20 (MYKGIFLCVLFAVICANSLA). Position 74 is a pyrrolidone carboxylic acid (Q74). Q87 is modified (glutamine amide).

The protein belongs to the gastrin/cholecystokinin family. As to expression, expressed by the skin glands.

It localises to the secreted. The polypeptide is Prolevitide (Xenopus laevis (African clawed frog)).